The chain runs to 215 residues: Adenylate kinase (215 aa).

10–15 contacts ATP; it reads GSGKGT. Residues 30–59 form an NMP region; the sequence is STGDLFRTNIENDTPLGKEIKQIVENGQLV. AMP contacts are provided by residues threonine 31, arginine 36, 57-59, 85-88, and glutamine 92; these read QLV and GFPR. The segment at 121 to 158 is LID; the sequence is GRRICQSCCKIFNIYTLPTKEKEICDFCQGILYQRKDD. Arginine 122 is an ATP binding site. Zn(2+)-binding residues include cysteine 125 and cysteine 128. Residue 131 to 132 participates in ATP binding; the sequence is IF. 2 residues coordinate Zn(2+): cysteine 145 and cysteine 148. 2 residues coordinate AMP: arginine 155 and arginine 166. Residue lysine 194 coordinates ATP.

Belongs to the adenylate kinase family. In terms of assembly, monomer.

The protein resides in the cytoplasm. The catalysed reaction is AMP + ATP = 2 ADP. It functions in the pathway purine metabolism; AMP biosynthesis via salvage pathway; AMP from ADP: step 1/1. In terms of biological role, catalyzes the reversible transfer of the terminal phosphate group between ATP and AMP. Plays an important role in cellular energy homeostasis and in adenine nucleotide metabolism. The protein is Adenylate kinase of Borrelia recurrentis (strain A1).